Here is a 306-residue protein sequence, read N- to C-terminus: D-alanine--D-alanine ligase (306 aa).

The ATP-grasp domain occupies 106–301 (KLLWQSAGIN…FEELVLKILG (196 aa)). ATP is bound at residue 132–187 (AKELGLPLIVKPSREGSTIGLSKVREAGEVAAAWHLAARHDAMVLAEQFIEGTELT). Residues D255, E268, and N270 each contribute to the Mg(2+) site.

The protein belongs to the D-alanine--D-alanine ligase family. The cofactor is Mg(2+). Mn(2+) is required as a cofactor.

Its subcellular location is the cytoplasm. The enzyme catalyses 2 D-alanine + ATP = D-alanyl-D-alanine + ADP + phosphate + H(+). It functions in the pathway cell wall biogenesis; peptidoglycan biosynthesis. Cell wall formation. This chain is D-alanine--D-alanine ligase, found in Nitrosospira multiformis (strain ATCC 25196 / NCIMB 11849 / C 71).